We begin with the raw amino-acid sequence, 378 residues long: Myoglobin (378 aa).

A heme-binding site is contributed by His332.

It belongs to the indoleamine 2,3-dioxygenase family. In terms of assembly, homodimer. The cofactor is heme.

Its function is as follows. Serves a reserve supply of oxygen and facilitates the movement of oxygen within muscles. The protein is Myoglobin of Haliotis madaka (Giant abalone).